Consider the following 301-residue polypeptide: Glycine--tRNA ligase alpha subunit (301 aa).

Belongs to the class-II aminoacyl-tRNA synthetase family. As to quaternary structure, tetramer of two alpha and two beta subunits.

It localises to the cytoplasm. The catalysed reaction is tRNA(Gly) + glycine + ATP = glycyl-tRNA(Gly) + AMP + diphosphate. This is Glycine--tRNA ligase alpha subunit from Shewanella piezotolerans (strain WP3 / JCM 13877).